A 406-amino-acid chain; its full sequence is Tyrosine--tRNA ligase (406 aa).

L-tyrosine is bound at residue tyrosine 35. The 'HIGH' region motif lies at 40 to 49 (PTADSLHVGH). L-tyrosine-binding residues include tyrosine 168 and glutamine 172. The short motif at 228 to 232 (KMGKT) is the 'KMSKS' region element. Lysine 231 lines the ATP pocket. The S4 RNA-binding domain maps to 340–404 (SELLDILVEA…RGKKNYNKIV (65 aa)).

This sequence belongs to the class-I aminoacyl-tRNA synthetase family. TyrS type 1 subfamily. Homodimer.

The protein resides in the cytoplasm. It catalyses the reaction tRNA(Tyr) + L-tyrosine + ATP = L-tyrosyl-tRNA(Tyr) + AMP + diphosphate + H(+). Functionally, catalyzes the attachment of tyrosine to tRNA(Tyr) in a two-step reaction: tyrosine is first activated by ATP to form Tyr-AMP and then transferred to the acceptor end of tRNA(Tyr). This is Tyrosine--tRNA ligase from Clostridium perfringens (strain SM101 / Type A).